A 787-amino-acid chain; its full sequence is Protein PAT1 homolog 2 (787 aa).

Disordered stretches follow at residues 94-120 (KHLG…WTQD), 134-221 (EQVQ…NASP), 338-374 (VREH…GLQF), 411-445 (LAKK…QQPQ), and 765-787 (VSES…FVRG). A compositionally biased stretch (polar residues) spans 105-120 (GSFSRESSTATDWTQD). A compositionally biased stretch (low complexity) spans 142 to 153 (SSQPQSSPNSNS). Polar residues-rich tracts occupy residues 154–171 (LYRT…QHYS), 180–198 (STFT…SSPS), and 208–221 (GGSQ…NASP). S184 and S192 each carry phosphoserine. Residues 341 to 353 (HKHKSSHRSRKNR) are compositionally biased toward basic residues. 2 stretches are compositionally biased toward polar residues: residues 355-373 (GISQ…SGLQ) and 436-445 (SRNSSDQQPQ).

Its function is as follows. Activator of mRNA decapping. Involved in mRNA decay via decapping. The polypeptide is Protein PAT1 homolog 2 (Arabidopsis thaliana (Mouse-ear cress)).